The primary structure comprises 325 residues: MNLNKHSERKFDLITVGRACIDLNAVEYNRPMEETMTFSKYVGGSPANIAIGTAKLGLKVGFIGKISADQHGRFIEKYMRDLSINTDGMVKDTEGRKVGLAFTEIKSPDECSILMYRENVADLYLTPEEISEDYIKEARVLLISGTALAQSPSREAVLKAVSLARKNDVAIAFELDYRPYTWTNTEETAVYYSLVAEQADVIIGTRDEFDMMENQVGGKNEATKAHLFQHQAEIVVIKHGVEGSFAYTKAGETFQAKAYKTKVLKTFGAGDSYASAFLYGLFSGESIETALKYGSAAASIVVSKHSSSDAMPTADEIKALIAQAE.

It belongs to the carbohydrate kinase PfkB family.

The enzyme catalyses 5-dehydro-2-deoxy-D-gluconate + ATP = 6-phospho-5-dehydro-2-deoxy-D-gluconate + ADP + H(+). It functions in the pathway polyol metabolism; myo-inositol degradation into acetyl-CoA; acetyl-CoA from myo-inositol: step 5/7. Its function is as follows. Catalyzes the phosphorylation of 5-dehydro-2-deoxy-D-gluconate (2-deoxy-5-keto-D-gluconate or DKG) to 6-phospho-5-dehydro-2-deoxy-D-gluconate (DKGP). In Listeria monocytogenes serotype 4a (strain HCC23), this protein is 5-dehydro-2-deoxygluconokinase.